Reading from the N-terminus, the 4516-residue chain is Dynein axonemal heavy chain 1 (4516 aa).

A stem region spans residues 1–1748 (MVTLSISDTL…YIRAVNAEFI (1748 aa)). Residues 78-160 (SSGSDKSLKN…RKSPLAGTDK (83 aa)) form a disordered region. 2 stretches are compositionally biased toward basic and acidic residues: residues 83 to 97 (KSLK…KEEA) and 113 to 129 (ENHD…RNPE). AAA stretches follow at residues 1749 to 1956 (YGYE…VISA), 2016 to 2249 (QAIR…TTVK), 2422 to 2682 (TMMP…VFQG), and 2780 to 2972 (DYNQ…CCTI). Positions 1787–1794 (GPAGTGKT) match the GPAGTGKT motif motif. 1787–1794 (GPAGTGKT) lines the ATP pocket. A CFDEFNR motif motif is present at residues 1837 to 1843 (CFDEFNR). ATP is bound by residues 2054-2061 (GPTGSGKS), 2460-2467 (GPTGTGKT), and 2819-2826 (GVGGSGRS). Positions 2987–3285 (ATRFLHEIPE…MHKYHFVAKA (299 aa)) are stalk. Positions 3293 to 3394 (LREAQDDLEV…QDTVENLENM (102 aa)) form a coiled coil. AAA stretches follow at residues 3388 to 3618 (VENL…EERP) and 3831 to 4050 (LPAF…SYNS).

Belongs to the dynein heavy chain family. Consists of at least two heavy chains and a number of intermediate and light chains. In terms of tissue distribution, expressed in brain.

The protein localises to the cytoplasm. It localises to the cytoskeleton. It is found in the cilium axoneme. The protein resides in the cell projection. Its subcellular location is the cilium. The protein localises to the flagellum. Functionally, force generating protein of cilia required for sperm flagellum motility. Produces force towards the minus ends of microtubules. Dynein has ATPase activity; the force-producing power stroke is thought to occur on release of ADP. Required in spermatozoa for the formation of the inner dynein arms and biogenesis of the axoneme. In Rattus norvegicus (Rat), this protein is Dynein axonemal heavy chain 1.